A 233-amino-acid polypeptide reads, in one-letter code: 7-cyano-7-deazaguanine synthase (233 aa).

7–17 (LSGGLDSAVTS) contributes to the ATP binding site. Zn(2+) is bound by residues Cys195, Cys206, Cys209, and Cys212.

Belongs to the QueC family. Zn(2+) is required as a cofactor.

The catalysed reaction is 7-carboxy-7-deazaguanine + NH4(+) + ATP = 7-cyano-7-deazaguanine + ADP + phosphate + H2O + H(+). It functions in the pathway purine metabolism; 7-cyano-7-deazaguanine biosynthesis. Its function is as follows. Catalyzes the ATP-dependent conversion of 7-carboxy-7-deazaguanine (CDG) to 7-cyano-7-deazaguanine (preQ(0)). This Methanococcus maripaludis (strain C5 / ATCC BAA-1333) protein is 7-cyano-7-deazaguanine synthase.